The following is a 406-amino-acid chain: Pygopus homolog 2 (406 aa).

Disordered stretches follow at residues 1 to 73 (MAAS…DHLV) and 106 to 323 (VQGG…PQPP). Ala-2 is subject to N-acetylalanine. Position 40 is a phosphoserine (Ser-40). Residues 41–47 (PEKKRRK) carry the Nuclear localization signal motif. Pro residues-rich tracts occupy residues 131-141 (RQPPPFPPNPM) and 149-158 (PQGPGYPPPG). Residues 164-179 (SQPFNQPLGQNFSPPS) are compositionally biased toward polar residues. Residues 236–252 (SLPPNTSPFPGPDPGFP) are compositionally biased toward pro residues. Positions 285–296 (NGNQPSFPPNSS) are enriched in polar residues. Thr-302 carries the post-translational modification Phosphothreonine. Residues 327–385 (VYPCGACRSEVNDDQDAILCEASCQKWFHRECTGMTESAYGLLTTEASAVWACDLCLKT) form a PHD-type zinc finger.

As to quaternary structure, binds to BCL9 via the PHD-type zinc finger motif, and thereby becomes part of the nuclear beta-catenin/TCF complex.

The protein localises to the nucleus. Its function is as follows. Involved in signal transduction through the Wnt pathway. In Homo sapiens (Human), this protein is Pygopus homolog 2 (PYGO2).